The sequence spans 458 residues: Exodeoxyribonuclease 7 large subunit (458 aa).

It belongs to the XseA family. In terms of assembly, heterooligomer composed of large and small subunits.

Its subcellular location is the cytoplasm. It carries out the reaction Exonucleolytic cleavage in either 5'- to 3'- or 3'- to 5'-direction to yield nucleoside 5'-phosphates.. Bidirectionally degrades single-stranded DNA into large acid-insoluble oligonucleotides, which are then degraded further into small acid-soluble oligonucleotides. The chain is Exodeoxyribonuclease 7 large subunit from Sodalis glossinidius (strain morsitans).